The sequence spans 91 residues: Small ribosomal subunit protein uS19 (91 aa).

This sequence belongs to the universal ribosomal protein uS19 family.

Its function is as follows. Protein S19 forms a complex with S13 that binds strongly to the 16S ribosomal RNA. The chain is Small ribosomal subunit protein uS19 from Synechococcus sp. (strain CC9311).